The chain runs to 221 residues: MEPERLKFGGPRELCGAADLISQFKLVQHHEFFCKKSLPVSLSDSHYLHNVVGDTEIRKGEGMQLDQLIESISQSRETNIRIQPFDIDELQESFQLNDMTPVELPPAEKGAPTIPSKSKSESKDRDRKHKKHKDRDKDKDREHKKHKHKHKDRSKDKDKDKDRDRKKDKNGHHDSGDHSKKHHDKKRKHDGDEDLNDVQRHKKNKHKSSKLDEVGAIRVAG.

Positions 101 to 221 (PVELPPAEKG…DEVGAIRVAG (121 aa)) are disordered. The segment covering 142 to 152 (EHKKHKHKHKD) has biased composition (basic residues). Basic and acidic residues predominate over residues 153 to 178 (RSKDKDKDKDRDRKKDKNGHHDSGDH). Positions 179 to 188 (SKKHHDKKRK) are enriched in basic residues.

The protein belongs to the plant Mediator complex subunit 19 family. In terms of assembly, component of the Mediator complex. Interacts with FIB2.

It is found in the nucleus. Component of the Mediator complex, a coactivator involved in the regulated transcription of nearly all RNA polymerase II-dependent genes. Mediator functions as a bridge to convey information from gene-specific regulatory proteins to the basal RNA polymerase II transcription machinery. The Mediator complex, having a compact conformation in its free form, is recruited to promoters by direct interactions with regulatory proteins and serves for the assembly of a functional preinitiation complex with RNA polymerase II and the general transcription factors. The chain is Mediator of RNA polymerase II transcription subunit 19a (MED19A) from Arabidopsis thaliana (Mouse-ear cress).